Consider the following 113-residue polypeptide: MGNSFRSDRVAVEIQREINDILRNKVRDPRVQDVNITDVQLTGDLSQATVYYSLLSNLASDNEKAATALKKATGLFKSELAKRMTIFKIPDLTFAKDESVEYGSKIDEILTWA.

Belongs to the RbfA family. Monomer. Binds 30S ribosomal subunits, but not 50S ribosomal subunits or 70S ribosomes.

The protein resides in the cytoplasm. Functionally, one of several proteins that assist in the late maturation steps of the functional core of the 30S ribosomal subunit. Associates with free 30S ribosomal subunits (but not with 30S subunits that are part of 70S ribosomes or polysomes). Required for efficient processing of 16S rRNA. May interact with the 5'-terminal helix region of 16S rRNA. The protein is Ribosome-binding factor A of Lactococcus lactis subsp. cremoris (Streptococcus cremoris).